Here is a 93-residue protein sequence, read N- to C-terminus: Cell division protein FtsB (93 aa).

Topologically, residues 1–3 are cytoplasmic; the sequence is MRV. A helical transmembrane segment spans residues 4 to 21; the sequence is TLVVLLALFLALQYRLWF. The Periplasmic portion of the chain corresponds to 22–93; sequence GKNSLPDYWR…FFRLVPDRNP (72 aa). Residues 28 to 75 adopt a coiled-coil conformation; that stretch reads DYWRLQQEVSNQKNTNENLERRNQLIYADIEDLREGEDALEERARNEL.

It belongs to the FtsB family. Part of a complex composed of FtsB, FtsL and FtsQ.

Its subcellular location is the cell inner membrane. Its function is as follows. Essential cell division protein. May link together the upstream cell division proteins, which are predominantly cytoplasmic, with the downstream cell division proteins, which are predominantly periplasmic. In Idiomarina loihiensis (strain ATCC BAA-735 / DSM 15497 / L2-TR), this protein is Cell division protein FtsB.